Consider the following 64-residue polypeptide: MRSVALTLCAIIAGYLLVSNLQNVFSPEVCTLVITGESIRINGCNLSPAHFRAISHLKVLQIHL.

The Lumenal portion of the chain corresponds to 1–4; the sequence is MRSV. A helical transmembrane segment spans residues 5–27; the sequence is ALTLCAIIAGYLLVSNLQNVFSP. Residues 28-64 are Cytoplasmic-facing; the sequence is EVCTLVITGESIRINGCNLSPAHFRAISHLKVLQIHL.

It belongs to the Tymovirales TGBp3 protein family.

It localises to the host endoplasmic reticulum membrane. Its function is as follows. Plays a role in viral cell-to-cell propagation, by facilitating genome transport to neighboring plant cells through plasmosdesmata. May induce the formation of granular vesicles derived from the Endoplasmic reticulum, which align on actin filaments. This Lily symptomless virus (LSV) protein is Movement protein TGBp3.